The sequence spans 117 residues: Large ribosomal subunit protein uL24 (117 aa).

This sequence belongs to the universal ribosomal protein uL24 family. Part of the 50S ribosomal subunit.

Functionally, one of two assembly initiator proteins, it binds directly to the 5'-end of the 23S rRNA, where it nucleates assembly of the 50S subunit. Its function is as follows. One of the proteins that surrounds the polypeptide exit tunnel on the outside of the subunit. In Nostoc punctiforme (strain ATCC 29133 / PCC 73102), this protein is Large ribosomal subunit protein uL24.